Here is a 429-residue protein sequence, read N- to C-terminus: Histidine--tRNA ligase (429 aa).

The protein belongs to the class-II aminoacyl-tRNA synthetase family. As to quaternary structure, homodimer.

Its subcellular location is the cytoplasm. It catalyses the reaction tRNA(His) + L-histidine + ATP = L-histidyl-tRNA(His) + AMP + diphosphate + H(+). This is Histidine--tRNA ligase from Alkalilimnicola ehrlichii (strain ATCC BAA-1101 / DSM 17681 / MLHE-1).